Consider the following 346-residue polypeptide: N-acetyl-gamma-glutamyl-phosphate reductase (346 aa).

Cys-149 is an active-site residue.

This sequence belongs to the NAGSA dehydrogenase family. Type 1 subfamily.

The protein resides in the cytoplasm. It catalyses the reaction N-acetyl-L-glutamate 5-semialdehyde + phosphate + NADP(+) = N-acetyl-L-glutamyl 5-phosphate + NADPH + H(+). It participates in amino-acid biosynthesis; L-arginine biosynthesis; N(2)-acetyl-L-ornithine from L-glutamate: step 3/4. Its function is as follows. Catalyzes the NADPH-dependent reduction of N-acetyl-5-glutamyl phosphate to yield N-acetyl-L-glutamate 5-semialdehyde. The protein is N-acetyl-gamma-glutamyl-phosphate reductase of Pelobacter propionicus (strain DSM 2379 / NBRC 103807 / OttBd1).